The sequence spans 492 residues: Trichothecene C-15 hydroxylase (492 aa).

Residues 6–26 (LWPLLALSGGTGLAYLVVVVV) traverse the membrane as a helical segment. Positions 88-106 (AMKDVRGHRKSGEPEHGKD) are enriched in basic and acidic residues. Positions 88–116 (AMKDVRGHRKSGEPEHGKDPISVQSNGDN) are disordered. N124, N198, and N290 each carry an N-linked (GlcNAc...) asparagine glycan. Residue C438 coordinates heme.

It belongs to the cytochrome P450 family. Heme is required as a cofactor.

The protein localises to the membrane. The protein operates within sesquiterpene biosynthesis; trichothecene biosynthesis. In terms of biological role, trichothecene C-15 hydroxylase; part of the core gene cluster that mediates the biosynthesis of trichothecenes, a very large family of chemically related bicyclic sesquiterpene compounds acting as mycotoxins, including T2-toxin. The biosynthesis of trichothecenes begins with the cyclization of farnesyl diphosphate to trichodiene and is catalyzed by the trichodiene synthase TRI5. Trichodiene undergoes a series of oxygenations catalyzed by the cytochrome P450 monooxygenase TRI4. TRI4 controls the addition of four oxygens at C-2, C-3, C-11, and the C-12, C-13-epoxide to form the intermediate isotrichotriol. Isotrichotriol then undergoes a non-enzymatic isomerization and cyclization to form isotrichodermol. During this process, the oxygen at the C-2 position becomes the pyran ring oxygen and the hydroxyl group at C-11 is lost. More complex type A trichothecenes are built by modifying isotrichodermol through a series of paired hydroxylation and acetylation or acylation steps. Isotrichodermol is converted to isotrichodermin by the acetyltransferase TRI101. TRI101 encodes a C-3 transacetylase that acts as a self-protection or resistance factor during biosynthesis and that the presence of a free C-3 hydroxyl group is a key component of Fusarium trichothecene phytotoxicity. A second hydroxyl group is added to C-15 by the trichothecene C-15 hydroxylase TRI11, producing 15-decalonectrin, which is then acetylated by TRI3, producing calonectrin. A third hydroxyl group is added at C-4 by the cytochrome P450 monooxygenase TRI13, converting calonectrin to 3,15-diacetoxyspirpenol, which is subsequently acetylated by the acetyltransferase TRI7. A fourth hydroxyl group is added to C-8 by the cytochrome P450 monooxygenase TRI1, followed by the addition of an isovaleryl moiety by TRI16. Finally, the acetyl group is removed from the C-3 position by the trichothecene C-3 esterase TRI8 to produce T-2 toxin. In Fusarium sporotrichioides, this protein is Trichothecene C-15 hydroxylase.